The following is a 108-amino-acid chain: UPF0145 protein AF_0869 (108 aa).

Belongs to the UPF0145 family.

This Archaeoglobus fulgidus (strain ATCC 49558 / DSM 4304 / JCM 9628 / NBRC 100126 / VC-16) protein is UPF0145 protein AF_0869.